Here is a 468-residue protein sequence, read N- to C-terminus: Alpha-2A adrenergic receptor (468 aa).

The Extracellular segment spans residues 1–48 (MFRQEQPLAEGSFAPMGSLQPDAGNASWNGTEAPGGGARATPYSLQVT). Asn25 and Asn29 each carry an N-linked (GlcNAc...) asparagine glycan. A helical membrane pass occupies residues 49–74 (LTLVCLAGLLMLFTVFGNVLVIIAVF). Residues 75-85 (TSRALKAPQNL) are Cytoplasmic-facing. Residues 86–111 (FLVSLASADILVATLVIPFSLANEVM) form a helical membrane-spanning segment. Residues 112–121 (GYWYFGKAWC) are Extracellular-facing. The cysteines at positions 121 and 203 are disulfide-linked. A helical membrane pass occupies residues 122–144 (EIYLALDVLFCTSSIVHLCAISL). Topologically, residues 145 to 164 (DRYWSITQAIEYNLKRTPRR) are cytoplasmic. A helical membrane pass occupies residues 165-188 (IKAIIVTVWVISAVISFPPLISFE). The Extracellular segment spans residues 189–207 (KKRGRSGQPSAEPRCEIND). Residues 208-232 (QKWYVISSSIGSFFAPCLIMILVYV) form a helical membrane-spanning segment. Topologically, residues 233 to 392 (RIYQIAKRRT…RQNREKRFTF (160 aa)) are cytoplasmic. Disordered regions lie at residues 242–279 (TRVPPSRRGPDATAAELPGSAERRPNGLGPERGGVGPV) and 291–381 (NGAP…SRWR). Residues 315–332 (SSEHAERPPGSRRSERGP) are compositionally biased toward basic and acidic residues. Ser348 carries the post-translational modification Phosphoserine. Positions 351–366 (RRGPGATGLGAPTAGP) are enriched in low complexity. At Arg370 the chain carries Omega-N-methylarginine. A helical transmembrane segment spans residues 393-417 (VLAVVIGVFVVCWFPFFFTYTLTAI). Topologically, residues 418–427 (GCPVPPTLFK) are extracellular. Residues 428–448 (FFFWFGYCNSSLNPVIYTIFN) traverse the membrane as a helical segment. Over 449-468 (HDFRRAFKKILCRGDRKRIV) the chain is Cytoplasmic. Cys460 carries S-palmitoyl cysteine lipidation.

The protein belongs to the G-protein coupled receptor 1 family. Adrenergic receptor subfamily. ADRA2A sub-subfamily. Component of the ADA2A-containing complex (ATAC), composed of KAT14, KAT2A, TADA2L, TADA3L, ZZ3, MBIP, WDR5, YEATS2, CCDC101 and DR1. In terms of tissue distribution, retina, brain and olfactory lobe.

The protein localises to the cell membrane. Alpha-2 adrenergic receptors mediate the catecholamine-induced inhibition of adenylate cyclase through the action of G proteins. Component of the ATAC complex, a complex with histone acetyltransferase activity on histones H3 and H4. The protein is Alpha-2A adrenergic receptor of Bos taurus (Bovine).